We begin with the raw amino-acid sequence, 607 residues long: TOM1-like protein 8 (607 aa).

Residues 9 to 138 form the VHS domain; the sequence is ATSDMLIGPD…ELLRAGIVFP (130 aa). The interval 141 to 175 is disordered; it reads PQITPSSGQNGPSTRYPQNSRNARQEAIDTSTESE. The GAT domain maps to 175-263; that stretch reads EFPTLSLTEI…LLAKHEAIAS (89 aa). Ser-297 bears the Phosphoserine mark. Residues 355–379 are compositionally biased toward polar residues; sequence NNCESSTPTSNPHANHQKVQQNYSN. Disordered stretches follow at residues 355–393, 407–460, and 555–582; these read NNCESSTPTSNPHANHQKVQQNYSNGFGPGHQEQSYYGQ, QPSS…SPTH, and DNGNNNTNPYQVSSHQPPPMMKPMNKKP. Ser-410 is subject to Phosphoserine. Residues 448 to 460 are compositionally biased toward low complexity; sequence QSPSSSPQYSPTH. The segment covering 555 to 569 has biased composition (polar residues); sequence DNGNNNTNPYQVSSH.

It belongs to the TOM1 family. Specifically expressed in siliques and flowers.

The protein resides in the membrane. Its function is as follows. Might contribute to the loading of the ESCRT machinery. This Arabidopsis thaliana (Mouse-ear cress) protein is TOM1-like protein 8.